The chain runs to 299 residues: tRNA pseudouridine synthase B (299 aa).

The Nucleophile role is filled by aspartate 49. Residues 241–299 (MPRVTVSGRAAARVLHGVAPAVRVEHPDGTTVAVVAANGALLALAEADGGGLRLRKVFG) form the PUA domain.

The protein belongs to the pseudouridine synthase TruB family. Type 1 subfamily.

It carries out the reaction uridine(55) in tRNA = pseudouridine(55) in tRNA. In terms of biological role, responsible for synthesis of pseudouridine from uracil-55 in the psi GC loop of transfer RNAs. This chain is tRNA pseudouridine synthase B, found in Symbiobacterium thermophilum (strain DSM 24528 / JCM 14929 / IAM 14863 / T).